A 566-amino-acid chain; its full sequence is Arginine--tRNA ligase (566 aa).

The 'HIGH' region motif lies at 121 to 131 (ANPNGPFHIGH).

It belongs to the class-I aminoacyl-tRNA synthetase family.

It localises to the cytoplasm. It carries out the reaction tRNA(Arg) + L-arginine + ATP = L-arginyl-tRNA(Arg) + AMP + diphosphate. This chain is Arginine--tRNA ligase, found in Methanococcus maripaludis (strain C6 / ATCC BAA-1332).